Consider the following 323-residue polypeptide: o-succinylbenzoate synthase (323 aa).

Residue K134 is the Proton donor of the active site. Positions 162, 191, and 214 each coordinate Mg(2+). Residue K236 is the Proton acceptor of the active site.

It belongs to the mandelate racemase/muconate lactonizing enzyme family. MenC type 1 subfamily. It depends on a divalent metal cation as a cofactor.

It carries out the reaction (1R,6R)-6-hydroxy-2-succinyl-cyclohexa-2,4-diene-1-carboxylate = 2-succinylbenzoate + H2O. It participates in quinol/quinone metabolism; 1,4-dihydroxy-2-naphthoate biosynthesis; 1,4-dihydroxy-2-naphthoate from chorismate: step 4/7. Its pathway is quinol/quinone metabolism; menaquinone biosynthesis. Converts 2-succinyl-6-hydroxy-2,4-cyclohexadiene-1-carboxylate (SHCHC) to 2-succinylbenzoate (OSB). The protein is o-succinylbenzoate synthase of Yersinia pseudotuberculosis serotype I (strain IP32953).